The chain runs to 706 residues: Elongation factor G (706 aa).

The tr-type G domain maps to 12 to 288 (EKTRNIGIMA…GVTNYLPSPN (277 aa)). GTP-binding positions include 21–28 (AHIDAGKT), 85–89 (DTPGH), and 139–142 (NKMD). The interval 288–309 (NDVPAITGHHPQDKEEDITRHP) is disordered. Over residues 297–309 (HPQDKEEDITRHP) the composition is skewed to basic and acidic residues.

This sequence belongs to the TRAFAC class translation factor GTPase superfamily. Classic translation factor GTPase family. EF-G/EF-2 subfamily.

The protein localises to the cytoplasm. In terms of biological role, catalyzes the GTP-dependent ribosomal translocation step during translation elongation. During this step, the ribosome changes from the pre-translocational (PRE) to the post-translocational (POST) state as the newly formed A-site-bound peptidyl-tRNA and P-site-bound deacylated tRNA move to the P and E sites, respectively. Catalyzes the coordinated movement of the two tRNA molecules, the mRNA and conformational changes in the ribosome. The sequence is that of Elongation factor G from Salinibacter ruber (strain DSM 13855 / M31).